The following is an 89-amino-acid chain: Small ribosomal subunit protein uS15 (89 aa).

Belongs to the universal ribosomal protein uS15 family. In terms of assembly, part of the 30S ribosomal subunit. Forms a bridge to the 50S subunit in the 70S ribosome, contacting the 23S rRNA.

In terms of biological role, one of the primary rRNA binding proteins, it binds directly to 16S rRNA where it helps nucleate assembly of the platform of the 30S subunit by binding and bridging several RNA helices of the 16S rRNA. Its function is as follows. Forms an intersubunit bridge (bridge B4) with the 23S rRNA of the 50S subunit in the ribosome. The chain is Small ribosomal subunit protein uS15 from Ligilactobacillus salivarius (strain UCC118) (Lactobacillus salivarius).